Here is a 3583-residue protein sequence, read N- to C-terminus: MSKKSIQKVYALTPMQEGMLYHAMLDPHSSSYFTQLELGIHGAFDLEIFEKSVNELIRSYDILRTVFVHQQLQKPRQVVLAERKTKVHYEDISHADENRQKEHIERYKQDVQRQGFNLAKDILFKVAVFRLAADQLYLVWSNHHIMMDGWSMGVLMKSLFQNYEALRAGRTPANGQGKPYSDYIKWLGKQDNEEAESYWSERLAGFEQPSVLPGRLPVKKDEYVNKEYSFTWDETLVARIQQTANLHQVTGPNLFQAVWGIVLSKYNFTDDVIFGTVVSGRPSEINGIETMAGLFINTIPVRVKVERDAAFADIFTAVQQHAVEAERYDYVPLYEIQKRSALDGNLLNHLVAFENYPLDQELENGSMEDRLGFSIKVESAFEQTSFDFNLIVYPGKTWTVKIKYNGAAFDSAFIERTAEHLTRMMEAAVDQPAAFVREYGLVGDEEQRQIVEVFNSTKAELPEGMAVHQVFEEQAKRTPASTAVVYEGTKLTYRELNAAANRLARKLVEHGLQKGETAAIMNDRSVETVVGMLAVLKAGAAYVPLDPALPGDRLRFMAEDSSVRMVLIGNSYTGQAHQLQVPVLTLDIGFEESEAADNLNLPSAPSDLAYIMYTSGSTGKPKGVMIEHKSILRLVKNAGYVPVTEEDRMAQTGAVSFDAGTFEVFGALLNGAALYPVKKETLLDAKQFAAFLREQSITTMWLTSPLFNQLAAKDAGMFGTLRHLIIGGDALVPHIVSKVKQASPSLSLWNGYGPTENTTFSTSFLIDREYGGSIPIGKPIGNSTAYIMDEQQCLQPIGAPGELCVGGIGVARGYVNLPELTEKQFLEDPFRPGERIYRTGDLARWLPDGNIEFLGRIDNQVKVRGFRIELGEIETKLNMAEHVTEAAVIIRKNKADENEICAYFTADREVAVSELRKTLSQSLPDYMVPAHLIQMDSLPLTPNGKINKKELPAPQSEAVQPEYAAPKTESEKKLAEIWEGILGVKAGVTDNFFMIGGHSLKAMMMTAKIQEHFHKEVPIKVLFEKPTIQELALYLEENESKEEQTFEPIRQASYQQHYPVSPAQRRMYILNQLGQANTSYNVPAVLLLEGEVDKDRLENAIQQLINRHEILRTSFDMIDGEVVQTVHKNISFQLEAAKGREEDAEEIIKAFVQPFELNRAPLVRSKLVQLEEKRHLLLIDMHHIITDGSSTGILIGDLAKIYQGADLELPQIHYKDYAVWHKEQTNYQKDEEYWLDVFKGELPILDLPADFERPAERSFAGERVMFGLDKQITAQIKSLMAETDTTMYMFLLAAFNVLLSKYASQDDIIVGSPTAGRTHPDLQGVPGMFVNTVALRTAPAGDKTFAQFLEEVKTASLQAFEHQSYPLEELIEKLPLTRDTSRSPLFSVMFNMQNMEIPSLRLGDLKISSYSMLHHVAKFDLSLEAVEREEDIGLSFDYATALFKDETIRRWSRHFVNIIKAAAANPNVRLSDVDLLSSAETAALLEERHMTQITEATFAALFEKQAQQTPDHSAVKAGGNLLTYRELDEQANQLAHHLRAQGAGNEDIVAIVMDRSAEVMVSILGVMKAGAAFLPIDPDTPEERIRYSLEDSGAKFAVVNERNMTAIGQYEGIIVSLDDGKWRNESKERPSSISGSRNLAYVIYTSGTTGKPKGVQIEHRNLTNYVSWFSEEAGLTENDKTVLLSSYAFDLGYTSMFPVLLGGGELHIVQKETYTAPDEIAHYIKEHGITYIKLTPSLFHTIVNTASFAKDANFESLRLIVLGGEKIIPTDVIAFRKMYGHTEFINHYGPTEATIGAIAGRVDLYEPDAFAKRPTIGRPIANAGALVLNEALKLVPPGASGQLYITGQGLARGYLNRPQLTAERFVENPYSPGSLMYKTGDVVRRLSDGTLAFIGRADDQVKIRGYRIEPKEIETVMLSLSGIQEAVVLAVSEGGLQELCAYYTSDQDIEKAELRYQLSLTLPSHMIPAFFVQVDAIPLTANGKTDRNALPKPNAAQSGGKALAAPETALEESLCRIWQKTLGIEAIGIDDNFFDLGGHSLKGMMLIANIQAELEKSVPLKALFEQPTVRQLAAYMEASAVSGGHQVLKPADKQDMYPLSSAQKRMYVLNQLDRQTISYNMPSVLLMEGELDISRLRDSLNQLVNRHESLRTSFMEANGEPVQRIIEKAEVDLHVFEAKEDEADQKIKEFIRPFDLNDAPLIRAALLRIEAKKHLLLLDMHHIIADGVSRGIFVKELALLYKGEQLPEPTLHYKDFAVWQNEAEQKERMKEHEAYWMSVLSGELPELDLPLDYARPPVQSFKGDTIRFRTGSETAKAVEKLLAETGTTLHMVLHAVFHVFLSKISGQRDIVIGSVTAGRTNADVQDMPGMFVNTLALRMEAKEQQTFAELLELAKQTNLSALEHQEYPFEDLVNQLDLPRDMSRNPLFNVMVTTENPDKEQLTLQNLSISPYEAHQGTSKFDLTLGGFTDENGIGLQLEYATDLFAKETAEKWSEYVLRLLKAVADNPNQPLSSLLLVTETEKQALLEAWKGKALPVPTDKTVHQLFEETVQRHKDRPAVTYNGQSWTYGELNAKANRLARILMDCGISPDDRVGVLTKPSLEMSAAVLGVLKAGAAFVPIDPDYPDQRIEYILQDSGAKLLLKQEGISVPDSYTGDVILLDGSRTILSLPLDENDEGNPETAVTAENLAYMIYTSGTTGQPKGVMVEHHALVNLCFWHHDAFSMTAEDRSAKYAGFGFDASIWEMFPTWTIGAELHVIDEAIRLDIVRLNDYFETNGVTITFLPTQLAEQFMELENTSLRVLLTGGDKLKRAVKKPYTLVNNYGPTENTVVATSAEIHPEEGSLSIGRAIANTRVYILGEGNQVQPEGVAGELCVAGRGLARGYLNREDETAKRFVADPFVPGERMYRTGDLVKWVNGGIEYIGRIDQQVKVRGYRIELSEIEVQLAQLSEVQDAAVTAVKDKGGNTAIAAYVTPETADIEALKSTLKETLPDYMIPAFWVTLNELPVTANGKVDRKALPEPDIEAGSGEYKAPTTDMEELLAGIWQDVLGMSEVGVTDNFFSLGGDSIKGIQMASRLNQHGWKLEMKDLFQHPTIEELTQYVERAEGKQADQGPVEGEVILTPIQRWFFEKNFTNKHHWNQSVMLHAKKGFDPERVEKTLQALIEHHDALRMVYREENGDIVQVYKPIGESKVSFEIVDLYGSDEEMLRSQIKLLANKLQSSLDLRNGPLLKAEQYRTEAGDHLLIAVHHLVVDGVSWRILLEDFASGYMQAEKEESLVFPQKTNSFKDWAEELAAFSQSAHLLQQAEYWSQIAAEQVSPLPKDCETEQRIVKDTSSVLCELTAEDTKHLLTDVHQPYGTEINDILLSALGLTMKEWTKGAKIGINLEGHGREDIIPNVNISRTVGWFTAQYPVVLDISDADASAVIKTVKENLRRIPDKGVGYGILRYFTETAETKGFTPEISFNYLGQFDSEVKTDFFEPSAFDMGRQVSGESEALYALSFSGMIRNGRFVLSCSYNEKEFERATVEEQMERFKENLLMLIRHCTEKEDKEFTPSDFSAEDLEMDEMGDIFDMLEENLK.

3 Carrier domains span residues 965 to 1039 (APKT…EENE), 2005 to 2080 (APET…EASA), and 3034 to 3108 (APTT…ERAE). Residues S999, S2040, and S3069 each carry the O-(pantetheine 4'-phosphoryl)serine modification.

It belongs to the ATP-dependent AMP-binding enzyme family. Pantetheine 4'-phosphate is required as a cofactor.

The protein operates within antibiotic biosynthesis; surfactin biosynthesis. Its function is as follows. This protein is a multifunctional enzyme able to activate and polymerize the amino acids Leu, Glu, Asp and Val. Activation sites for these AA consist of individual domains. The chain is Surfactin synthase subunit 2 (srfAB) from Bacillus subtilis (strain 168).